A 220-amino-acid polypeptide reads, in one-letter code: Ribosomal RNA small subunit methyltransferase G (220 aa).

Residues Gly82, Leu87, 105 to 107 (DST), 133 to 134 (VE), and Arg147 contribute to the S-adenosyl-L-methionine site.

The protein belongs to the methyltransferase superfamily. RNA methyltransferase RsmG family.

It is found in the cytoplasm. Specifically methylates the N7 position of a guanine in 16S rRNA. The sequence is that of Ribosomal RNA small subunit methyltransferase G from Chlorobium limicola (strain DSM 245 / NBRC 103803 / 6330).